Consider the following 341-residue polypeptide: Holliday junction branch migration complex subunit RuvB (341 aa).

A disordered region spans residues 1–22 (MSETAGKGVTMPEIMQSSYPDE). The interval 4–193 (TAGKGVTMPE…FGIISRLEFY (190 aa)) is large ATPase domain (RuvB-L). ATP is bound by residues isoleucine 32, arginine 33, glycine 74, lysine 77, threonine 78, threonine 79, 140–142 (EDY), arginine 183, tyrosine 193, and arginine 230. Threonine 78 is a Mg(2+) binding site. The interval 194–264 (TPEELSQIIL…LVNHALQKLD (71 aa)) is small ATPAse domain (RuvB-S). A head domain (RuvB-H) region spans residues 267 to 341 (EKGLDQMDRK…KAYKHLNLTD (75 aa)). DNA contacts are provided by arginine 322 and arginine 327.

Belongs to the RuvB family. As to quaternary structure, homohexamer. Forms an RuvA(8)-RuvB(12)-Holliday junction (HJ) complex. HJ DNA is sandwiched between 2 RuvA tetramers; dsDNA enters through RuvA and exits via RuvB. An RuvB hexamer assembles on each DNA strand where it exits the tetramer. Each RuvB hexamer is contacted by two RuvA subunits (via domain III) on 2 adjacent RuvB subunits; this complex drives branch migration. In the full resolvosome a probable DNA-RuvA(4)-RuvB(12)-RuvC(2) complex forms which resolves the HJ.

The protein resides in the cytoplasm. It catalyses the reaction ATP + H2O = ADP + phosphate + H(+). Its function is as follows. The RuvA-RuvB-RuvC complex processes Holliday junction (HJ) DNA during genetic recombination and DNA repair, while the RuvA-RuvB complex plays an important role in the rescue of blocked DNA replication forks via replication fork reversal (RFR). RuvA specifically binds to HJ cruciform DNA, conferring on it an open structure. The RuvB hexamer acts as an ATP-dependent pump, pulling dsDNA into and through the RuvAB complex. RuvB forms 2 homohexamers on either side of HJ DNA bound by 1 or 2 RuvA tetramers; 4 subunits per hexamer contact DNA at a time. Coordinated motions by a converter formed by DNA-disengaged RuvB subunits stimulates ATP hydrolysis and nucleotide exchange. Immobilization of the converter enables RuvB to convert the ATP-contained energy into a lever motion, pulling 2 nucleotides of DNA out of the RuvA tetramer per ATP hydrolyzed, thus driving DNA branch migration. The RuvB motors rotate together with the DNA substrate, which together with the progressing nucleotide cycle form the mechanistic basis for DNA recombination by continuous HJ branch migration. Branch migration allows RuvC to scan DNA until it finds its consensus sequence, where it cleaves and resolves cruciform DNA. This Lawsonia intracellularis (strain PHE/MN1-00) protein is Holliday junction branch migration complex subunit RuvB.